Reading from the N-terminus, the 310-residue chain is p-hydroxybenzoic acid efflux pump subunit AaeA (310 aa).

A helical transmembrane segment spans residues 12-32; the sequence is AITLVLVILAFIAIFRAWVYY.

Belongs to the membrane fusion protein (MFP) (TC 8.A.1) family.

It is found in the cell inner membrane. Forms an efflux pump with AaeB. The polypeptide is p-hydroxybenzoic acid efflux pump subunit AaeA (Salmonella gallinarum (strain 287/91 / NCTC 13346)).